The primary structure comprises 98 residues: Co-chaperonin GroES (98 aa).

It belongs to the GroES chaperonin family. As to quaternary structure, heptamer of 7 subunits arranged in a ring. Interacts with the chaperonin GroEL.

The protein localises to the cytoplasm. In terms of biological role, together with the chaperonin GroEL, plays an essential role in assisting protein folding. The GroEL-GroES system forms a nano-cage that allows encapsulation of the non-native substrate proteins and provides a physical environment optimized to promote and accelerate protein folding. GroES binds to the apical surface of the GroEL ring, thereby capping the opening of the GroEL channel. This is Co-chaperonin GroES from Allorhizobium ampelinum (strain ATCC BAA-846 / DSM 112012 / S4) (Agrobacterium vitis (strain S4)).